Consider the following 125-residue polypeptide: Protein ApaG (125 aa).

The region spanning 1-125 is the ApaG domain; the sequence is MINSPRVCVQ…FRLAIPSLIN (125 aa).

In Sodalis glossinidius (strain morsitans), this protein is Protein ApaG.